The chain runs to 693 residues: Triadin (693 aa).

The Cytoplasmic portion of the chain corresponds to 1-47 (MTEITAEGNASTTTTVIDNKNGCIPKSPGKVLKRSVTEDIVTTFSSP). Residues 48–68 (AAWLLVIALIITWSAVAIVMF) form a helical membrane-spanning segment. Residues 69 to 693 (DLVDYKNFSA…NSPGQKQQEQ (625 aa)) are Lumenal-facing. Residues 117–130 (EGDEDDEDADEDID) are compositionally biased toward acidic residues. Disordered stretches follow at residues 117-260 (EGDE…AVHE), 278-649 (GDLK…QTRP), and 666-693 (FQFPVTPVQQPGENPGKTNSPGQKQQEQ). 2 stretches are compositionally biased toward basic and acidic residues: residues 131–241 (KGEI…KETP) and 249–260 (KKDDKEMPAVHE). Ser-301 is modified (phosphoserine). Over residues 305-352 (LEEKEKEEKKKMEKKDTSDTKKKEKEVKKKSEETTIDGKGKEPGKPPE) the composition is skewed to basic and acidic residues. The span at 354–364 (KQMTAKLTTQA) shows a compositional bias: polar residues. 2 stretches are compositionally biased toward basic and acidic residues: residues 366–427 (ARKD…KEEI) and 438–502 (GKKE…KEAK). An N-linked (GlcNAc...) asparagine glycan is attached at Asn-515. Composition is skewed to basic and acidic residues over residues 526-547 (VKPEKAEHQEKGHPSIKKDKPK) and 558-579 (DSGKKKIEKSEKESKVPTREEN). N-linked (GlcNAc...) asparagine glycosylation is present at Asn-584. Basic and acidic residues predominate over residues 587–637 (KAEKPGKIPKDSKEAPASKKDKEDSKEAPTSKKDKEDSKDVPHSKKDKEVT). Residues 672–693 (PVQQPGENPGKTNSPGQKQQEQ) are compositionally biased toward polar residues.

Homooligomer of variable subunit number; disulfide-linked. Interacts with CASQ1 and RYR1 in skeletal muscle. Interacts with CASQ2. In terms of processing, phosphorylated by CaMK2. N-glycosylated. As to expression, detected in heart (at protein level). Detected in heart.

The protein localises to the sarcoplasmic reticulum membrane. Its function is as follows. Contributes to the regulation of lumenal Ca2+ release via the sarcoplasmic reticulum calcium release channels RYR1 and RYR2, a key step in triggering skeletal and heart muscle contraction. Required for normal organization of the triad junction, where T-tubules and the sarcoplasmic reticulum terminal cisternae are in close contact. Required for normal skeletal muscle strength. Plays a role in excitation-contraction coupling in the heart and in regulating the rate of heart beats. This is Triadin from Mus musculus (Mouse).